The following is a 374-amino-acid chain: tRNA-specific 2-thiouridylase MnmA (374 aa).

ATP contacts are provided by residues 13–20 (GMSGGVDS) and M39. The tract at residues 99–101 (NPD) is interaction with target base in tRNA. Residue C104 is the Nucleophile of the active site. Cysteines 104 and 201 form a disulfide. ATP is bound at residue G128. The interval 151–153 (KDQ) is interaction with tRNA. C201 serves as the catalytic Cysteine persulfide intermediate. The interval 313–314 (RY) is interaction with tRNA.

It belongs to the MnmA/TRMU family.

The protein resides in the cytoplasm. It catalyses the reaction S-sulfanyl-L-cysteinyl-[protein] + uridine(34) in tRNA + AH2 + ATP = 2-thiouridine(34) in tRNA + L-cysteinyl-[protein] + A + AMP + diphosphate + H(+). Its function is as follows. Catalyzes the 2-thiolation of uridine at the wobble position (U34) of tRNA, leading to the formation of s(2)U34. This Streptococcus suis (strain 98HAH33) protein is tRNA-specific 2-thiouridylase MnmA.